We begin with the raw amino-acid sequence, 203 residues long: Small ribosomal subunit protein uS2 (203 aa).

Belongs to the universal ribosomal protein uS2 family.

This is Small ribosomal subunit protein uS2 from Methanoregula boonei (strain DSM 21154 / JCM 14090 / 6A8).